Reading from the N-terminus, the 223-residue chain is Small ribosomal subunit protein uS3 (223 aa).

One can recognise a KH type-2 domain in the interval 39–107 (VREFLHKKLA…PVQINIEEVR (69 aa)).

Belongs to the universal ribosomal protein uS3 family. In terms of assembly, part of the 30S ribosomal subunit. Forms a tight complex with proteins S10 and S14.

In terms of biological role, binds the lower part of the 30S subunit head. Binds mRNA in the 70S ribosome, positioning it for translation. The chain is Small ribosomal subunit protein uS3 from Francisella tularensis subsp. mediasiatica (strain FSC147).